The primary structure comprises 295 residues: Putative aquaporin-12B (295 aa).

At 1–22 (MAGLNVSLSFFFATFTLCEAAR) the chain is on the cytoplasmic side. Residues 23–41 (RASKALLPVGAYEVFAREA) form a helical membrane-spanning segment. Over 42–55 (MRTLVELGPWAGDF) the chain is Extracellular. Residues 56–74 (GPDLLLTLLFLLFLAHGVT) form a helical membrane-spanning segment. Residues 75–76 (LD) lie on the Cytoplasmic side of the membrane. An intramembrane region (discontinuously helical) is located at residues 77 to 114 (GASANPTVSLQEFLMAEESLPGTLLKLAAQGLGMQAAC). The short motif at 81-83 (NPT) is the NPA 1 element. The Cytoplasmic portion of the chain corresponds to 115 to 120 (TLTRLC). Residues 121 to 142 (WAWELSDLHLLQSLMAQSCSSA) traverse the membrane as a helical segment. Residues 143–145 (LRT) lie on the Extracellular side of the membrane. A helical membrane pass occupies residues 146-166 (SVPHGALVEAACAFCFHLTLL). Over 167–174 (HLRHSPPA) the chain is Cytoplasmic. A helical membrane pass occupies residues 175–191 (YSGPAVALLVTVTAYTA). Topologically, residues 192 to 194 (GPF) are extracellular. Residues 195–206 (TSAFFNPALAAS) constitute an intramembrane region (discontinuously helical). The short motif at 200–202 (NPA) is the NPA 2 element. Residues 207–223 (VTFACSGHTLLEYVQVY) lie on the Extracellular side of the membrane. A helical membrane pass occupies residues 224-244 (WLGPLTGMVLAVLLHQGRLPH). At 245–295 (LFQRNLFYGQKNKYRAPRGKPAPASGDTQTPAKGSSVREPGRSGVEGPHSS) the chain is on the cytoplasmic side. Residues 257–295 (KYRAPRGKPAPASGDTQTPAKGSSVREPGRSGVEGPHSS) are disordered.

Belongs to the MIP/aquaporin (TC 1.A.8) family. AQP11/AQP12 subfamily. Homotetramer; each monomer provides an independent water pore.

Its subcellular location is the membrane. The enzyme catalyses H2O(in) = H2O(out). Its function is as follows. Putative aquaporin. Could form homotetrameric transmembrane channels, with each monomer independently mediating water transport across the plasma membrane along its osmotic gradient. The sequence is that of Putative aquaporin-12B from Homo sapiens (Human).